Consider the following 156-residue polypeptide: SsrA-binding protein (156 aa).

This sequence belongs to the SmpB family.

The protein localises to the cytoplasm. Its function is as follows. Required for rescue of stalled ribosomes mediated by trans-translation. Binds to transfer-messenger RNA (tmRNA), required for stable association of tmRNA with ribosomes. tmRNA and SmpB together mimic tRNA shape, replacing the anticodon stem-loop with SmpB. tmRNA is encoded by the ssrA gene; the 2 termini fold to resemble tRNA(Ala) and it encodes a 'tag peptide', a short internal open reading frame. During trans-translation Ala-aminoacylated tmRNA acts like a tRNA, entering the A-site of stalled ribosomes, displacing the stalled mRNA. The ribosome then switches to translate the ORF on the tmRNA; the nascent peptide is terminated with the 'tag peptide' encoded by the tmRNA and targeted for degradation. The ribosome is freed to recommence translation, which seems to be the essential function of trans-translation. The chain is SsrA-binding protein from Paracoccus denitrificans (strain Pd 1222).